Here is an 86-residue protein sequence, read N- to C-terminus: Cell division topological specificity factor (86 aa).

Belongs to the MinE family.

Functionally, prevents the cell division inhibition by proteins MinC and MinD at internal division sites while permitting inhibition at polar sites. This ensures cell division at the proper site by restricting the formation of a division septum at the midpoint of the long axis of the cell. This Shewanella piezotolerans (strain WP3 / JCM 13877) protein is Cell division topological specificity factor.